We begin with the raw amino-acid sequence, 210 residues long: Large ribosomal subunit protein uL3 (210 aa).

It belongs to the universal ribosomal protein uL3 family. Part of the 50S ribosomal subunit. Forms a cluster with proteins L14 and L19.

One of the primary rRNA binding proteins, it binds directly near the 3'-end of the 23S rRNA, where it nucleates assembly of the 50S subunit. This is Large ribosomal subunit protein uL3 from Pediococcus pentosaceus (strain ATCC 25745 / CCUG 21536 / LMG 10740 / 183-1w).